A 947-amino-acid polypeptide reads, in one-letter code: Protocadherin alpha-4 (947 aa).

The N-terminal stretch at 1 to 29 (MEFSWGSGQESQRLLLSFLLLAIWEAGNS) is a signal peptide. Cadherin domains follow at residues 30–133 (QIHY…PPRF), 134–242 (PTTQ…APVF), 243–350 (DRSL…VPEL), 351–455 (EFKS…APVF), 456–565 (AQPE…APTL), and 573–681 (SGGI…APSR). At 30–697 (QIHYSIPEEA…HSEASLVDVN (668 aa)) the chain is on the extracellular side. Cys-96 and Cys-102 are disulfide-bonded. Asn-257 and Asn-265 each carry an N-linked (GlcNAc...) asparagine glycan. Thr-438 carries an O-linked (Man) threonine glycan. O-linked (Man) serine glycosylation is found at Ser-440 and Ser-442. Residue Asn-548 is glycosylated (N-linked (GlcNAc...) asparagine). The chain crosses the membrane as a helical span at residues 698 to 718 (VYLIIAICAVSSLLVLTLLLY). The Cytoplasmic portion of the chain corresponds to 719–947 (TALRCSTVPS…GNSTTDNSDQ (229 aa)). PXXP repeat units follow at residues 734-737 (PPKP), 774-777 (PSLS), 796-799 (PRQP), 829-832 (PGGP), 870-873 (PGNP), and 888-891 (PGSP). The tract at residues 734–891 (PPKPVMVCSS…PDKFIIPGSP (158 aa)) is 6 X 4 AA repeats of P-X-X-P. The tract at residues 738–947 (VMVCSSAVGS…GNSTTDNSDQ (210 aa)) is required for interaction with FYN. Disordered regions lie at residues 761-805 (GEYP…DWRY) and 824-853 (ILRAGPGGPDQQWPTVSSATPEPEAGEVSP). The segment at 891 to 947 (PAIISIRQEPANNQIDKSDFITFGKKEETKKKKKKKKGNKTQEKKEKGNSTTDNSDQ) is disordered. The span at 906–920 (DKSDFITFGKKEETK) shows a compositional bias: basic and acidic residues.

Forms homodimers in trans (molecules expressed by two different cells). Forms promiscuous heterodimers in cis (at the plasma membrane of the same cell) with other protocadherins. Interacts with FYN. In terms of tissue distribution, detected in brain throughout embryonic development. Detected in adult brain, in particular in cerebellum and forebrain.

It is found in the cell membrane. Calcium-dependent cell-adhesion protein involved in cells self-recognition and non-self discrimination. Thereby, it is involved in the establishment and maintenance of specific neuronal connections in the brain. This is Protocadherin alpha-4 from Mus musculus (Mouse).